A 245-amino-acid chain; its full sequence is Type I iodothyronine deiodinase (245 aa).

The Extracellular portion of the chain corresponds to 1–9; that stretch reads LSIRVLLHK. A helical; Signal-anchor for type III membrane protein membrane pass occupies residues 10–30; the sequence is LLILLQVTLSVVVGKTMMILF. Residues 31–245 are Cytoplasmic-facing; sequence PDTTKRYILK…EIRAVLEKLK (215 aa). The active site involves U123. Position 123 (U123) is a non-standard amino acid, selenocysteine.

It belongs to the iodothyronine deiodinase family. In terms of assembly, predominantly monomer. Can form homodimers but homodimerization is not essential for enzyme activity.

The protein localises to the cell membrane. Its subcellular location is the endoplasmic reticulum membrane. It is found in the basolateral cell membrane. It catalyses the reaction 3,3',5-triiodo-L-thyronine + iodide + A + H(+) = L-thyroxine + AH2. The catalysed reaction is 3,3',5'-triiodo-L-thyronine + iodide + A + H(+) = L-thyroxine + AH2. The enzyme catalyses 3,3'-diiodo-L-thyronine + iodide + A + H(+) = 3,3',5'-triiodo-L-thyronine + AH2. It carries out the reaction 3,3'-diiodo-L-thyronine + iodide + A + H(+) = 3,3',5-triiodo-L-thyronine + AH2. It catalyses the reaction 3'-iodo-L-thyronine + iodide + A + H(+) = 3',5'-diiodo-L-thyronine + AH2. The catalysed reaction is 3-iodo-L-thyronine + iodide + A + H(+) = 3,5-diiodo-L-thyronine + AH2. The enzyme catalyses 3-iodo-L-thyronine + iodide + A + H(+) = 3,3'-diiodo-L-thyronine + AH2. It carries out the reaction 3,3'-diiodothyronamine + iodide + A + H(+) = 3,3',5'-triiodothyronamine + AH2. It catalyses the reaction 3'-iodothyronamine + iodide + A + H(+) = 3',5'-diiodothyronamine + AH2. The catalysed reaction is 3-iodothyronamine + iodide + A + H(+) = 3,3'-diiodothyronamine + AH2. The enzyme catalyses 3,3'-diiodothyronamine + iodide + A + H(+) = 3,3',5-triiodothyronamine + AH2. It carries out the reaction 3-iodothyronamine + iodide + A + H(+) = 3,5-diiodothyronamine + AH2. It catalyses the reaction 3,3'-diiodo-L-thyronine sulfate + iodide + A + H(+) = 3,3',5'-triiodo-L-thyronine sulfate + AH2. The catalysed reaction is 3,3',5'-triiodo-L-thyronine sulfate + iodide + A + H(+) = L-thyroxine sulfate + AH2. The enzyme catalyses 3,3'-diiodo-L-thyronine sulfate + iodide + A + H(+) = 3,3',5-triiodo-L-thyronine sulfate + AH2. Functionally, plays a crucial role in the metabolism of thyroid hormones (TH) and has specific roles in TH activation and inactivation by deiodination. Catalyzes the deiodiantion of L-thyroxine (T4) to 3,5,3'-triiodothyronine (T3) and 3,3',5'-triiodothyronine (rT3) to 3,3'-diiodothyronine (3,3'-T2) via outer-ring deiodination (ORD). Catalyzes the deiodiantion of T4 to rT3, T3 to 3,3'-T2, 3,5-diiodothyronine (3,5-T2) to 3-monoiodothyronine (3-T1) and 3,3'-T2 to 3-T1 via inner-ring deiodination (IRD). Catalyzes the deiodiantion of 3',5'-diiodothyronine (3',5'-T2) to 3'-monoiodothyronine (3'-T1) via ORD. Catalyzes the phenolic ring deiodinations of 3,3',5'-triiodothyronamine, 3',5'-diiodothyronamine and 3,3'-diiodothyronamine as well as tyrosyl ring deiodinations of 3,5,3'-triiodothyronamine and 3,5-diiodothyronamine. Catalyzes the deiodination of L-thyroxine sulfate and 3,3',5-triiodo-L-thyronine sulfate via IRD and of 3,3',5'-triiodo-L-thyronine sulfate via ORD. The polypeptide is Type I iodothyronine deiodinase (DIO1) (Gallus gallus (Chicken)).